The following is a 352-amino-acid chain: Aromatic amino acid aminotransferase (352 aa).

Residue K217 is modified to N6-(pyridoxal phosphate)lysine.

This sequence belongs to the class-II pyridoxal-phosphate-dependent aminotransferase family. Homodimer. Pyridoxal 5'-phosphate is required as a cofactor.

The catalysed reaction is an aromatic L-alpha-amino acid + 2-oxoglutarate = an aromatic oxo-acid + L-glutamate. In terms of biological role, aminotransferase that catalyzes the conversion of aromatic amino acids and 2-oxoglutarate into corresponding aromatic oxo acids and L-glutamate. The sequence is that of Aromatic amino acid aminotransferase from Cutibacterium acnes (strain DSM 16379 / KPA171202) (Propionibacterium acnes).